The primary structure comprises 326 residues: Biotin synthase (326 aa).

The 225-residue stretch at 51–275 (NAVQRSTLLS…MMPTSFVRLS (225 aa)) folds into the Radical SAM core domain. Residues cysteine 66, cysteine 70, and cysteine 73 each contribute to the [4Fe-4S] cluster site. Residues cysteine 110, cysteine 141, cysteine 201, and arginine 273 each contribute to the [2Fe-2S] cluster site.

The protein belongs to the radical SAM superfamily. Biotin synthase family. As to quaternary structure, homodimer. [4Fe-4S] cluster is required as a cofactor. [2Fe-2S] cluster serves as cofactor.

The enzyme catalyses (4R,5S)-dethiobiotin + (sulfur carrier)-SH + 2 reduced [2Fe-2S]-[ferredoxin] + 2 S-adenosyl-L-methionine = (sulfur carrier)-H + biotin + 2 5'-deoxyadenosine + 2 L-methionine + 2 oxidized [2Fe-2S]-[ferredoxin]. Its pathway is cofactor biosynthesis; biotin biosynthesis; biotin from 7,8-diaminononanoate: step 2/2. Its function is as follows. Catalyzes the conversion of dethiobiotin (DTB) to biotin by the insertion of a sulfur atom into dethiobiotin via a radical-based mechanism. This is Biotin synthase from Aromatoleum aromaticum (strain DSM 19018 / LMG 30748 / EbN1) (Azoarcus sp. (strain EbN1)).